A 499-amino-acid chain; its full sequence is Ent-kaurenoic acid oxidase 1 (499 aa).

The helical transmembrane segment at 5–25 (AWWAVAAVVAALAVVALDAAV) threads the bilayer. Cys-443 serves as a coordination point for heme.

Belongs to the cytochrome P450 family. Heme serves as cofactor.

Its subcellular location is the endoplasmic reticulum membrane. It catalyses the reaction ent-kaur-16-en-19-oate + 3 reduced [NADPH--hemoprotein reductase] + 3 O2 = gibberellin A12 + 3 oxidized [NADPH--hemoprotein reductase] + 4 H2O + 4 H(+). It carries out the reaction ent-kaur-16-en-19-oate + reduced [NADPH--hemoprotein reductase] + O2 = ent-7alpha-hydroxykaur-16-en-19-oate + oxidized [NADPH--hemoprotein reductase] + H2O + H(+). The enzyme catalyses ent-7alpha-hydroxykaur-16-en-19-oate + reduced [NADPH--hemoprotein reductase] + O2 = gibberellin A12 aldehyde + oxidized [NADPH--hemoprotein reductase] + 2 H2O + H(+). The catalysed reaction is gibberellin A12 aldehyde + reduced [NADPH--hemoprotein reductase] + O2 = gibberellin A12 + oxidized [NADPH--hemoprotein reductase] + H2O + 2 H(+). Its pathway is plant hormone biosynthesis; gibberellin biosynthesis. Catalyzes three successive oxidations of ent-kaurenoic acid giving gibberellin 12 (GA12), a key step in gibberellins (GAs) biosynthesis. GAs, which are involved many processes, including stem elongation, play a central role in plant development. The polypeptide is Ent-kaurenoic acid oxidase 1 (Hordeum vulgare (Barley)).